We begin with the raw amino-acid sequence, 513 residues long: Activin receptor type-2A (513 aa).

Positions 1–19 (MGAAAKLAFAVFLISCSSG) are cleaved as a signal peptide. The Extracellular segment spans residues 20-135 (AILGRSETQE…TSNPVTPKPP (116 aa)). Disulfide bonds link Cys30/Cys60, Cys50/Cys78, Cys85/Cys104, Cys91/Cys103, and Cys105/Cys110. 2 N-linked (GlcNAc...) asparagine glycosylation sites follow: Asn43 and Asn66. A helical membrane pass occupies residues 136–161 (YYNILLYSLVPLMLVAGIVICAFWVY). Over 162–513 (RHHKMAYPPV…VDFPPKESSL (352 aa)) the chain is Cytoplasmic. One can recognise a Protein kinase domain in the interval 192 to 485 (LQLLEVKARG…GERITQMQRL (294 aa)). ATP contacts are provided by residues 198–206 (KARGGFGCV) and Lys219. The active-site Proton acceptor is Asp322.

Belongs to the protein kinase superfamily. TKL Ser/Thr protein kinase family. TGFB receptor subfamily. Part of a complex consisting of MAGI2/ARIP1, ACVR2A, ACVR1B and SMAD3. Interacts with MAGI2/ARIP1. Interacts with type I receptor ACVR1. Interacts with TSC22D1/TSC-22. Interacts with activin A/INHBA. It depends on Mg(2+) as a cofactor. Mn(2+) is required as a cofactor.

The protein resides in the cell membrane. It catalyses the reaction L-threonyl-[receptor-protein] + ATP = O-phospho-L-threonyl-[receptor-protein] + ADP + H(+). The enzyme catalyses L-seryl-[receptor-protein] + ATP = O-phospho-L-seryl-[receptor-protein] + ADP + H(+). In terms of biological role, on ligand binding, forms a receptor complex consisting of two type II and two type I transmembrane serine/threonine kinases. Type II receptors phosphorylate and activate type I receptors which autophosphorylate, then bind and activate SMAD transcriptional regulators. Receptor for activin A, activin B and inhibin A. Mediates induction of adipogenesis by GDF6. This Ovis aries (Sheep) protein is Activin receptor type-2A (ACVR2A).